Here is a 481-residue protein sequence, read N- to C-terminus: ATP synthase subunit beta (481 aa).

160–167 (GGAGVGKT) contributes to the ATP binding site.

It belongs to the ATPase alpha/beta chains family. In terms of assembly, F-type ATPases have 2 components, CF(1) - the catalytic core - and CF(0) - the membrane proton channel. CF(1) has five subunits: alpha(3), beta(3), gamma(1), delta(1), epsilon(1). CF(0) has three main subunits: a(1), b(2) and c(9-12). The alpha and beta chains form an alternating ring which encloses part of the gamma chain. CF(1) is attached to CF(0) by a central stalk formed by the gamma and epsilon chains, while a peripheral stalk is formed by the delta and b chains.

Its subcellular location is the cell inner membrane. The catalysed reaction is ATP + H2O + 4 H(+)(in) = ADP + phosphate + 5 H(+)(out). Its function is as follows. Produces ATP from ADP in the presence of a proton gradient across the membrane. The catalytic sites are hosted primarily by the beta subunits. This chain is ATP synthase subunit beta, found in Myxococcus xanthus (strain DK1622).